Reading from the N-terminus, the 3120-residue chain is DNA-directed RNA polymerase subunit beta'' (3120 aa).

C323, C396, C403, and C406 together coordinate Zn(2+). An insert-1 region spans residues 595–1130 (FIGEGKQNVL…LKTLVLKKWF (536 aa)). The segment at 1796 to 2346 (KGHLVAYARP…NGIIQAKSLL (551 aa)) is insert-2. Residues 2422-2610 (NSNFLENTHF…PEGEGEKDMT (189 aa)) form an insert-3 region. Residues 2726-2801 (FSKKRWKKSI…KQNQTIILAL (76 aa)) form an insert-4 region. The insert-5 stretch occupies residues 2856–2996 (ASKMSEYMFS…LNQLLSNNLD (141 aa)). The segment at 2926 to 2956 (EGIDSSKIPSSNIPEGKVTQNNKRKSTRKNV) is disordered. Positions 2932 to 2946 (KIPSSNIPEGKVTQN) are enriched in polar residues.

Belongs to the RNA polymerase beta' chain family. RpoC2 subfamily. In plastids the minimal PEP RNA polymerase catalytic core is composed of four subunits: alpha, beta, beta', and beta''. When a (nuclear-encoded) sigma factor is associated with the core the holoenzyme is formed, which can initiate transcription. Zn(2+) is required as a cofactor.

It localises to the plastid. Its subcellular location is the chloroplast. The enzyme catalyses RNA(n) + a ribonucleoside 5'-triphosphate = RNA(n+1) + diphosphate. Its function is as follows. DNA-dependent RNA polymerase catalyzes the transcription of DNA into RNA using the four ribonucleoside triphosphates as substrates. The sequence is that of DNA-directed RNA polymerase subunit beta'' from Chlamydomonas reinhardtii (Chlamydomonas smithii).